Here is a 95-residue protein sequence, read N- to C-terminus: Small ribosomal subunit protein bS20 (95 aa).

Belongs to the bacterial ribosomal protein bS20 family.

Functionally, binds directly to 16S ribosomal RNA. In Fervidobacterium nodosum (strain ATCC 35602 / DSM 5306 / Rt17-B1), this protein is Small ribosomal subunit protein bS20.